Here is a 295-residue protein sequence, read N- to C-terminus: Nucleotide-binding protein SSU98_0619 (295 aa).

12–19 (GMSGAGKT) contributes to the ATP binding site. Position 62-65 (62-65 (DMRS)) interacts with GTP.

The protein belongs to the RapZ-like family.

Functionally, displays ATPase and GTPase activities. The sequence is that of Nucleotide-binding protein SSU98_0619 from Streptococcus suis (strain 98HAH33).